Consider the following 387-residue polypeptide: S-adenosylmethionine synthase (387 aa).

His-19 serves as a coordination point for ATP. Asp-21 serves as a coordination point for Mg(2+). Glu-47 lines the K(+) pocket. Gln-103 contributes to the L-methionine binding site. The tract at residues 103-113 (QSPDIAQGVEL) is flexible loop. Residues 167-169 (DMK), 233-234 (RF), Asp-242, 248-249 (RK), Ala-265, and Lys-269 contribute to the ATP site. An L-methionine-binding site is contributed by Asp-242. Position 273 (Lys-273) interacts with L-methionine.

It belongs to the AdoMet synthase family. In terms of assembly, homotetramer; dimer of dimers. Mg(2+) serves as cofactor. K(+) is required as a cofactor.

Its subcellular location is the cytoplasm. The enzyme catalyses L-methionine + ATP + H2O = S-adenosyl-L-methionine + phosphate + diphosphate. The protein operates within amino-acid biosynthesis; S-adenosyl-L-methionine biosynthesis; S-adenosyl-L-methionine from L-methionine: step 1/1. Catalyzes the formation of S-adenosylmethionine (AdoMet) from methionine and ATP. The overall synthetic reaction is composed of two sequential steps, AdoMet formation and the subsequent tripolyphosphate hydrolysis which occurs prior to release of AdoMet from the enzyme. The protein is S-adenosylmethionine synthase of Mycoplasma mycoides subsp. mycoides SC (strain CCUG 32753 / NCTC 10114 / PG1).